The primary structure comprises 86 residues: Small ribosomal subunit protein uS15c (86 aa).

This sequence belongs to the universal ribosomal protein uS15 family. Part of the 30S ribosomal subunit.

The protein resides in the plastid. This chain is Small ribosomal subunit protein uS15c (rps15), found in Cuscuta obtusiflora (Peruvian dodder).